A 584-amino-acid polypeptide reads, in one-letter code: Sulfite reductase [NADPH] hemoprotein beta-component (584 aa).

Residues C447, C453, C492, and C496 each coordinate [4Fe-4S] cluster. Residue C496 participates in siroheme binding.

The protein belongs to the nitrite and sulfite reductase 4Fe-4S domain family. Alpha(8)-beta(8). The alpha component is a flavoprotein, the beta component is a hemoprotein. The cofactor is siroheme. [4Fe-4S] cluster is required as a cofactor.

It carries out the reaction hydrogen sulfide + 3 NADP(+) + 3 H2O = sulfite + 3 NADPH + 4 H(+). It functions in the pathway sulfur metabolism; hydrogen sulfide biosynthesis; hydrogen sulfide from sulfite (NADPH route): step 1/1. Component of the sulfite reductase complex that catalyzes the 6-electron reduction of sulfite to sulfide. This is one of several activities required for the biosynthesis of L-cysteine from sulfate. This chain is Sulfite reductase [NADPH] hemoprotein beta-component, found in Colwellia psychrerythraea (strain 34H / ATCC BAA-681) (Vibrio psychroerythus).